Reading from the N-terminus, the 393-residue chain is Metal tolerance protein C2 (393 aa).

The segment at 1 to 23 (MERSISFNPRGDNELPDDRSSDV) is disordered. The Cytoplasmic portion of the chain corresponds to 1–113 (MERSISFNPR…VTSGNRQMKR (113 aa)). Positions 11 to 21 (GDNELPDDRSS) are enriched in basic and acidic residues. A helical membrane pass occupies residues 114-134 (LFLLIALNVLYSTTELSIGIF). At 135 to 139 (TGRVG) the chain is on the vacuolar side. Residues 140 to 160 (LVSDAFHLTFGCGLLTFSLFA) form a helical membrane-spanning segment. The Cytoplasmic segment spans residues 161 to 186 (MATSRKKPDHAYSYGYKRLEVLSAFT). The helical transmembrane segment at 187-207 (NALFLMFMSFSLAVEALHAFI) threads the bilayer. Residues 208-214 (QDESEHK) lie on the Vacuolar side of the membrane. Residues 215 to 235 (HYLIVSAVTNLLVNLLGVWFF) form a helical membrane-spanning segment. At 236 to 259 (RNYARVNIAYRKAEDMNYHSVCLH) the chain is on the cytoplasmic side. A helical transmembrane segment spans residues 260 to 280 (VISDSIRSAGLILASWLLSLG). The Vacuolar portion of the chain corresponds to 281–283 (VEN). A helical membrane pass occupies residues 284–304 (AEVLCLGLVSVTVFMLVMPLF). Topologically, residues 305–393 (KATGGVLLQM…QDLTLQTDYT (89 aa)) are cytoplasmic.

The protein belongs to the cation diffusion facilitator (CDF) transporter (TC 2.A.4) family.

It localises to the vacuole membrane. Functionally, involved in sequestration of excess metal in the cytoplasm into vacuoles to maintain metal homeostasis. In Arabidopsis thaliana (Mouse-ear cress), this protein is Metal tolerance protein C2 (MTPC2).